The sequence spans 313 residues: D-apiose import binding protein (313 aa).

A signal peptide spans 1 to 26 (MKLTRRLTLAAFASVLALGTAAPAFS). D-apiofuranose contacts are provided by residues Asn39, 115–116 (DR), 162–164 (DTN), Arg168, Asn218, Asp243, and Gln263.

This sequence belongs to the bacterial solute-binding protein 2 family.

The protein resides in the periplasm. Its function is as follows. Part of an ABC transporter complex involved in D-apiose import. The protein is D-apiose import binding protein of Rhizobium rhizogenes (strain K84 / ATCC BAA-868) (Agrobacterium radiobacter).